A 216-amino-acid chain; its full sequence is RNA pyrophosphohydrolase (216 aa).

Positions 6–149 constitute a Nudix hydrolase domain; it reads GFRPNVGIIL…KRDVYQLALT (144 aa). Positions 38-59 match the Nudix box motif; sequence GGIKYGETPMQAMYRELHEETG. Residues 159-191 form a disordered region; sequence AQRTDKSRGPRAPRYPRVANGHAASETPAAIDT.

Belongs to the Nudix hydrolase family. RppH subfamily. It depends on a divalent metal cation as a cofactor.

Functionally, accelerates the degradation of transcripts by removing pyrophosphate from the 5'-end of triphosphorylated RNA, leading to a more labile monophosphorylated state that can stimulate subsequent ribonuclease cleavage. In Burkholderia pseudomallei (strain 668), this protein is RNA pyrophosphohydrolase.